Reading from the N-terminus, the 203-residue chain is Ribosomal RNA small subunit methyltransferase G (203 aa).

S-adenosyl-L-methionine-binding positions include G73, L78, 124–125, and R138; that span reads VE.

The protein belongs to the methyltransferase superfamily. RNA methyltransferase RsmG family.

It is found in the cytoplasm. It carries out the reaction guanosine(527) in 16S rRNA + S-adenosyl-L-methionine = N(7)-methylguanosine(527) in 16S rRNA + S-adenosyl-L-homocysteine. Functionally, specifically methylates the N7 position of guanine in position 527 of 16S rRNA. In Haemophilus ducreyi (strain 35000HP / ATCC 700724), this protein is Ribosomal RNA small subunit methyltransferase G.